The chain runs to 137 residues: Nucleoside diphosphate kinase (137 aa).

Residues Lys9, Phe57, Arg85, Thr91, Arg102, and Asn112 each contribute to the ATP site. Catalysis depends on His115, which acts as the Pros-phosphohistidine intermediate.

The protein belongs to the NDK family. Homotetramer. Mg(2+) is required as a cofactor.

The protein localises to the cytoplasm. It carries out the reaction a 2'-deoxyribonucleoside 5'-diphosphate + ATP = a 2'-deoxyribonucleoside 5'-triphosphate + ADP. It catalyses the reaction a ribonucleoside 5'-diphosphate + ATP = a ribonucleoside 5'-triphosphate + ADP. In terms of biological role, major role in the synthesis of nucleoside triphosphates other than ATP. The ATP gamma phosphate is transferred to the NDP beta phosphate via a ping-pong mechanism, using a phosphorylated active-site intermediate. The protein is Nucleoside diphosphate kinase of Leptospira biflexa serovar Patoc (strain Patoc 1 / ATCC 23582 / Paris).